Consider the following 347-residue polypeptide: Uroporphyrinogen decarboxylase (347 aa).

Substrate-binding positions include 24–28 (RQAGR), Asp74, Tyr145, Ser200, and His315.

Belongs to the uroporphyrinogen decarboxylase family. As to quaternary structure, homodimer.

The protein resides in the cytoplasm. It carries out the reaction uroporphyrinogen III + 4 H(+) = coproporphyrinogen III + 4 CO2. Its pathway is porphyrin-containing compound metabolism; protoporphyrin-IX biosynthesis; coproporphyrinogen-III from 5-aminolevulinate: step 4/4. Functionally, catalyzes the decarboxylation of four acetate groups of uroporphyrinogen-III to yield coproporphyrinogen-III. In Hydrogenobaculum sp. (strain Y04AAS1), this protein is Uroporphyrinogen decarboxylase.